A 498-amino-acid polypeptide reads, in one-letter code: Putative BTB/POZ domain-containing protein L67 (498 aa).

The region spanning 26–96 is the BTB domain; that stretch reads SDINITLSDN…MYGISLSEIN (71 aa).

Belongs to the mimivirus BTB/WD family.

In Acanthamoeba polyphaga (Amoeba), this protein is Putative BTB/POZ domain-containing protein L67.